The primary structure comprises 349 residues: MKIQILLFALVLIFVEANAATQGKNTTIPALIVFGDSIMDTGNNNNLPTLLKCNFPPYGKDYPGGFATGRFSDGRVPSDLIAEKLGLAKTLPAYMNPYLKPEDLLKGVTFASGGTGYDPLTAKIMSVISVWDQLINFKEYISKIKRHFGEEKAKDILEHSFFLVVSSSNDLAHTYLAQTHRYDRTSYANFLADSAVHFVRELHKLGARKIGVFSAVPVGCVPLQRTVFGGFFTRGCNQPLNNMAKQFNARLSPALDSLDKELDGVILYINVYDTLFDMIQHPKKYGFEVADRGCCGKGLLAISYLCNSLNPFTCSNSSAYIFWDSYHPSERAYQVIVDNLLDKYLSKVY.

An N-terminal signal peptide occupies residues 1 to 19 (MKIQILLFALVLIFVEANA). N-linked (GlcNAc...) asparagine glycosylation occurs at asparagine 25. Serine 37 serves as the catalytic Nucleophile. The N-linked (GlcNAc...) asparagine glycan is linked to asparagine 316. Catalysis depends on residues aspartate 324 and histidine 327.

This sequence belongs to the 'GDSL' lipolytic enzyme family.

Its subcellular location is the secreted. This Arabidopsis thaliana (Mouse-ear cress) protein is GDSL esterase/lipase At1g58725.